The sequence spans 496 residues: Acyltransferase clz6 (496 aa).

H163 functions as the Proton acceptor in the catalytic mechanism.

Belongs to the plant acyltransferase family. As to quaternary structure, monomer.

The protein operates within secondary metabolite biosynthesis. Its function is as follows. Acyltransferase; part of the gene cluster that mediates the biosynthesis of squalestatin S1 (SQS1, also known as zaragozic acid A), a heavily oxidized fungal polyketide that offers potent cholesterol lowering activity by targeting squalene synthase (SS). SQS1 is composed of a 2,8-dioxobicyclic[3.2.1]octane-3,4,5-tricarboxyclic acid core that is connected to two lipophilic polyketide arms. These initial steps feature the priming of an unusual benzoic acid starter unit onto the highly reducing polyketide synthase clz14, followed by oxaloacetate extension and product release to generate a tricarboxylic acid containing product. The phenylalanine ammonia lyase (PAL) clz10 and the acyl-CoA ligase clz12 are involved in transforming phenylalanine into benzoyl-CoA. The citrate synthase-like protein clz17 is involved in connecting the C-alpha-carbons of the hexaketide chain and oxaloacetate to afford the tricarboxylic acid unit. The potential hydrolytic enzymes, clz11 and clz13, are in close proximity to pks2 and may participate in product release. On the other side, the tetraketide arm is synthesized by a the squalestatin tetraketide synthase clz2 and enzymatically esterified to the core in the last biosynthetic step, by the acetyltransferase clz6. The biosynthesis of the tetraketide must involve 3 rounds of chain extension. After the first and second rounds methyl-transfer occurs, and in all rounds of extension the ketoreductase and dehydratase are active. The enoyl reductase and C-MeT of clz2 are not active in the final round of extension. The acetyltransferase clz6 appears to have a broad substrate selectivity for its acyl CoA substrate, allowing the in vitro synthesis of novel squalestatins. The biosynthesis of SQS1 requires several oxidative steps likely performed by oxidoreductases clz3, clz15 and clz16. Finally, in support of the identification of the cluster as being responsible for SQS1 production, the cluster contains a gene encoding a putative squalene synthase (SS) clz20, suggesting a likely mechanism for self-resistance. In Cochliobolus lunatus (Filamentous fungus), this protein is Acyltransferase clz6.